The sequence spans 56 residues: Bowman-Birk type proteinase inhibitor I-2B (56 aa).

4 disulfides stabilise this stretch: C10–C25, C15–C23, C32–C39, and C36–C51.

This sequence belongs to the Bowman-Birk serine protease inhibitor family.

The sequence is that of Bowman-Birk type proteinase inhibitor I-2B from Triticum aestivum (Wheat).